A 456-amino-acid chain; its full sequence is Esterase MT1326 (456 aa).

3 LysM domains span residues 3 to 50 (STHA…RLIM), 54 to 101 (TRYT…RLIM), and 105 to 152 (TRYT…VLVI). Residues Ser294, Asp391, and His425 contribute to the active site.

This sequence belongs to the AB hydrolase superfamily.

It is found in the secreted. The protein resides in the cell wall. The catalysed reaction is a fatty acid ester + H2O = an aliphatic alcohol + a fatty acid + H(+). Exhibits lipolytic activity with medium chain length esters as optimum substrates. In Mycobacterium tuberculosis (strain CDC 1551 / Oshkosh), this protein is Esterase MT1326.